The chain runs to 229 residues: Orotidine 5'-phosphate decarboxylase (229 aa).

Substrate contacts are provided by residues aspartate 10, lysine 32, 59–68, threonine 119, arginine 180, glutamine 189, glycine 209, and arginine 210; that span reads DLKFHDIPNT. The active-site Proton donor is lysine 61.

This sequence belongs to the OMP decarboxylase family. Type 1 subfamily. Homodimer.

It catalyses the reaction orotidine 5'-phosphate + H(+) = UMP + CO2. It functions in the pathway pyrimidine metabolism; UMP biosynthesis via de novo pathway; UMP from orotate: step 2/2. Catalyzes the decarboxylation of orotidine 5'-monophosphate (OMP) to uridine 5'-monophosphate (UMP). The polypeptide is Orotidine 5'-phosphate decarboxylase (Legionella pneumophila (strain Paris)).